Here is a 111-residue protein sequence, read N- to C-terminus: Probable 4-amino-4-deoxy-L-arabinose-phosphoundecaprenol flippase subunit ArnE (111 aa).

The next 3 helical transmembrane spans lie at 38–58 (LWLG…LLVL), 61–81 (LPVG…TLAA), and 91–111 (PRHW…GSAA). Residues 40-109 (LGLALICMGA…IISGIIILGS (70 aa)) form the EamA domain.

Belongs to the ArnE family. Heterodimer of ArnE and ArnF.

The protein resides in the cell inner membrane. The protein operates within bacterial outer membrane biogenesis; lipopolysaccharide biosynthesis. Translocates 4-amino-4-deoxy-L-arabinose-phosphoundecaprenol (alpha-L-Ara4N-phosphoundecaprenol) from the cytoplasmic to the periplasmic side of the inner membrane. The polypeptide is Probable 4-amino-4-deoxy-L-arabinose-phosphoundecaprenol flippase subunit ArnE (Salmonella choleraesuis (strain SC-B67)).